We begin with the raw amino-acid sequence, 800 residues long: Leukocyte receptor cluster member 8 homolog (800 aa).

5 disordered regions span residues 118-149, 175-229, 245-273, 335-394, and 407-519; these read NYQS…MSYS, PCIQ…GFKF, SSEH…PQQQ, TIDW…GRGS, and KESS…HGHG. Low complexity-rich tracts occupy residues 120-131 and 184-201; these read QSMSSQSGQHQG and NQSN…SQQS. Positions 252–261 are enriched in polar residues; sequence SAGQQQQQAT. Residues 338-352 show a composition bias toward basic and acidic residues; it reads WSREPLPGKDGGKES. The span at 360–387 shows a compositional bias: polar residues; it reads QTTLQTSHGSTITITQSPRGGGNSTNAA. The segment covering 409–418 has biased composition (low complexity); that stretch reads SSSSSSAGSR. Basic residues-rich tracts occupy residues 419-433 and 508-519; these read SRSR…RRYR and EKRAARFQHGHG. The 165-residue stretch at 636 to 800 folds into the PCI domain; the sequence is DHEEFNQCQA…KLSLAVLPNI (165 aa).

In Xenopus laevis (African clawed frog), this protein is Leukocyte receptor cluster member 8 homolog (leng8).